We begin with the raw amino-acid sequence, 166 residues long: Protein-export protein SecB (166 aa).

Belongs to the SecB family. As to quaternary structure, homotetramer, a dimer of dimers. One homotetramer interacts with 1 SecA dimer.

The protein localises to the cytoplasm. Its function is as follows. One of the proteins required for the normal export of preproteins out of the cell cytoplasm. It is a molecular chaperone that binds to a subset of precursor proteins, maintaining them in a translocation-competent state. It also specifically binds to its receptor SecA. The chain is Protein-export protein SecB from Actinobacillus pleuropneumoniae serotype 5b (strain L20).